A 56-amino-acid chain; its full sequence is Repressor-like protein SSo7c4 (56 aa).

The SpoVT-AbrB domain maps to 4–51; that stretch reads EEIVKVSRNYQVTIPAKVRQKFQIKEGDLVKVTFDESGGVVKIQLLDS.

The sequence is that of Repressor-like protein SSo7c4 from Saccharolobus solfataricus (strain ATCC 35092 / DSM 1617 / JCM 11322 / P2) (Sulfolobus solfataricus).